A 432-amino-acid polypeptide reads, in one-letter code: Gamma-glutamyl phosphate reductase (432 aa).

This sequence belongs to the gamma-glutamyl phosphate reductase family.

It is found in the cytoplasm. It catalyses the reaction L-glutamate 5-semialdehyde + phosphate + NADP(+) = L-glutamyl 5-phosphate + NADPH + H(+). It participates in amino-acid biosynthesis; L-proline biosynthesis; L-glutamate 5-semialdehyde from L-glutamate: step 2/2. In terms of biological role, catalyzes the NADPH-dependent reduction of L-glutamate 5-phosphate into L-glutamate 5-semialdehyde and phosphate. The product spontaneously undergoes cyclization to form 1-pyrroline-5-carboxylate. The sequence is that of Gamma-glutamyl phosphate reductase from Methylorubrum populi (strain ATCC BAA-705 / NCIMB 13946 / BJ001) (Methylobacterium populi).